The chain runs to 465 residues: A-type ATP synthase subunit B (465 aa).

This sequence belongs to the ATPase alpha/beta chains family. In terms of assembly, has multiple subunits with at least A(3), B(3), C, D, E, F, H, I and proteolipid K(x).

It is found in the cell membrane. Functionally, component of the A-type ATP synthase that produces ATP from ADP in the presence of a proton gradient across the membrane. The B chain is a regulatory subunit. The protein is A-type ATP synthase subunit B of Pyrococcus horikoshii (strain ATCC 700860 / DSM 12428 / JCM 9974 / NBRC 100139 / OT-3).